A 744-amino-acid polypeptide reads, in one-letter code: FHF complex subunit HOOK-interacting protein 2B (744 aa).

2 disordered regions span residues 184-213 (KTAR…LNRD) and 510-530 (LDSG…SSDG). Basic and acidic residues predominate over residues 197-213 (AGYRDKDCPHSDALNRD).

It belongs to the FHIP family. Expressed in colon.

In terms of biological role, able to activate MAPK/ERK and TGFB signaling pathways. May regulate the activity of genes involved in intestinal barrier function and immunoprotective inflammation. May play a role in cell proliferation. This is FHF complex subunit HOOK-interacting protein 2B from Mus musculus (Mouse).